The sequence spans 402 residues: Plasminogen activator inhibitor 1 (402 aa).

A signal peptide spans 1–23 (MRMSPVFACLALGLALIFGEGSA). Asn-232, Asn-288, and Asn-352 each carry an N-linked (GlcNAc...) asparagine glycan.

This sequence belongs to the serpin family. As to quaternary structure, forms a heterodimer with TMPRSS7. Interacts with VTN. Binds LRP1B; binding is followed by internalization and degradation. Interacts with PPP1CB. In complex with PLAU/uPA, interacts with PLAUR/uPAR. Interacts with SORL1 and LRP1, either alone or in complex with PLAU; these interactions are abolished in the presence of LRPAP1/RAP. The ternary complex composed of PLAUR-PLAU-PAI1 also interacts with SORL1. Interacts with PLAT/tPA. Also interacts with SORL1, when complexed to PLAT/tPA. As to expression, vascular endothelial cells may be the primary site of synthesis of plasma PAI1.

It is found in the secreted. Its function is as follows. Serine protease inhibitor. Inhibits TMPRSS7. Is a primary inhibitor of tissue-type plasminogen activator (PLAT) and urokinase-type plasminogen activator (PLAU). As PLAT inhibitor, it is required for fibrinolysis down-regulation and is responsible for the controlled degradation of blood clots. As PLAU inhibitor, it is involved in the regulation of cell adhesion and spreading. Acts as a regulator of cell migration, independently of its role as protease inhibitor. It is required for stimulation of keratinocyte migration during cutaneous injury repair. It is involved in cellular and replicative senescence. Plays a role in alveolar type 2 cells senescence in the lung. Is involved in the regulation of cementogenic differentiation of periodontal ligament stem cells, and regulates odontoblast differentiation and dentin formation during odontogenesis. The chain is Plasminogen activator inhibitor 1 (SERPINE1) from Bos taurus (Bovine).